Here is a 252-residue protein sequence, read N- to C-terminus: Hydroxyacylglutathione hydrolase (252 aa).

Zn(2+) is bound by residues His-54, His-56, Asp-58, His-59, His-113, Asp-132, and His-170.

Belongs to the metallo-beta-lactamase superfamily. Glyoxalase II family. As to quaternary structure, monomer. It depends on Zn(2+) as a cofactor.

It carries out the reaction an S-(2-hydroxyacyl)glutathione + H2O = a 2-hydroxy carboxylate + glutathione + H(+). It participates in secondary metabolite metabolism; methylglyoxal degradation; (R)-lactate from methylglyoxal: step 2/2. Functionally, thiolesterase that catalyzes the hydrolysis of S-D-lactoyl-glutathione to form glutathione and D-lactic acid. In Gloeobacter violaceus (strain ATCC 29082 / PCC 7421), this protein is Hydroxyacylglutathione hydrolase.